The sequence spans 336 residues: Homeobox-leucine zipper protein HAT14 (336 aa).

2 disordered regions span residues 53-141 (RSLS…PDSV) and 160-194 (SNKR…KLRL). Over residues 64-81 (EDEKKKPAPRAKKSDEFR) the composition is skewed to basic and acidic residues. Over residues 120–129 (VEEEEEEEEA) the composition is skewed to acidic residues. Over residues 130–141 (VPSMSVSPPDSV) the composition is skewed to low complexity. Residues 160–173 (SNKRDIDDEVERSA) show a composition bias toward basic and acidic residues. Residues 187–246 (STRKKLRLSKDQSAFLEDSFKEHSTLNPKQKIALAKQLNLRPRQVEVWFQNRRARTKLKQ) constitute a DNA-binding region (homeobox). Residues 254–275 (LKRCCESLTEENRRLQKEVKEL) form a leucine-zipper region.

It belongs to the HD-ZIP homeobox family. Class II subfamily.

The protein localises to the nucleus. Its function is as follows. Probable transcription factor. The polypeptide is Homeobox-leucine zipper protein HAT14 (HAT14) (Arabidopsis thaliana (Mouse-ear cress)).